The primary structure comprises 281 residues: CDAN1-interacting nuclease 1 (281 aa).

Thr114 bears the Phosphothreonine mark.

Its subcellular location is the nucleus. It is found in the cytoplasm. In terms of biological role, plays a role in erythroid cell differentiation. This Mus musculus (Mouse) protein is CDAN1-interacting nuclease 1.